The chain runs to 302 residues: Spheroidin-like protein (302 aa).

Residues methionine 1 to serine 19 form the signal peptide. Asparagine 193 and asparagine 293 each carry an N-linked (GlcNAc...) asparagine; by host glycan.

As to quaternary structure, homodimer; disulfide-linked.

The protein localises to the host membrane. Component of the virus occlusion bodies, which are large proteinaceous structures (polyhedra), that protect the virus from the outside environment for extended periods until they are ingested by insect larvae. This chain is Spheroidin-like protein (SLP), found in Autographa californica nuclear polyhedrosis virus (AcMNPV).